A 450-amino-acid polypeptide reads, in one-letter code: Class E vacuolar protein-sorting machinery protein HSE1 (450 aa).

One can recognise a VHS domain in the interval Ala15–Leu145. 3 disordered regions span residues Trp141–Glu167, Phe179–Ser212, and Pro374–Tyr450. Over residues Glu147–Glu167 the composition is skewed to basic and acidic residues. Residues Asp163–Ser182 enclose the UIM domain. The span at Gln184 to Leu196 shows a compositional bias: polar residues. Positions Gln197–Gln209 are enriched in low complexity. The 60-residue stretch at Ser212–Glu271 folds into the SH3 domain. Over residues Asn394–Asn432 the composition is skewed to low complexity.

Belongs to the STAM family. In terms of assembly, component of the ESCRT-0 complex composed of HSE1 and VPS27.

Its subcellular location is the endosome membrane. Its function is as follows. Component of the ESCRT-0 complex which is the sorting receptor for ubiquitinated cargo proteins at the multivesicular body (MVB). This is Class E vacuolar protein-sorting machinery protein HSE1 (HSE1) from Candida glabrata (strain ATCC 2001 / BCRC 20586 / JCM 3761 / NBRC 0622 / NRRL Y-65 / CBS 138) (Yeast).